A 419-amino-acid chain; its full sequence is Argininosuccinate synthase (419 aa).

ATP is bound by residues 9–17 (AYSGGLDTS) and Ala35. Positions 86 and 91 each coordinate L-citrulline. Position 114–122 (114–122 (AHGATGKGN)) interacts with ATP. L-aspartate-binding residues include Thr118, Asn122, and Asp123. Asn122 serves as a coordination point for L-citrulline. The L-citrulline site is built by Arg126, Ser179, Ser188, Glu270, and Tyr282.

The protein belongs to the argininosuccinate synthase family. Type 1 subfamily. Homotetramer.

It carries out the reaction L-citrulline + L-aspartate + ATP = 2-(N(omega)-L-arginino)succinate + AMP + diphosphate + H(+). The protein operates within amino-acid biosynthesis; L-arginine biosynthesis; L-arginine from L-ornithine and carbamoyl phosphate: step 2/3. It participates in nitrogen metabolism; urea cycle; (N(omega)-L-arginino)succinate from L-aspartate and L-citrulline: step 1/1. The protein is Argininosuccinate synthase of Drosophila melanogaster (Fruit fly).